Reading from the N-terminus, the 136-residue chain is Histone H3 (136 aa).

The interval 1–43 (MARTKQTARKSTGGKAPRKQLATKAARKSAPASGGVKKPHRFR) is disordered. N6-methylated lysine is present on Lys5. Lys10 carries the N6-acetyllysine; alternate modification. Lys10 carries the N6-methylated lysine; alternate modification. Phosphoserine is present on Ser11. Thr12 is subject to Phosphothreonine. Lys15 bears the N6-acetyllysine mark. N6-acetyllysine; alternate occurs at positions 19 and 24. N6-methylated lysine; alternate occurs at positions 19 and 24. Lys28 carries the N6-methylated lysine modification. Ser29 is subject to Phosphoserine. The residue at position 37 (Lys37) is an N6-methylated lysine.

It belongs to the histone H3 family. As to quaternary structure, the nucleosome is a histone octamer containing two molecules each of H2A, H2B, H3 and H4 assembled in one H3-H4 heterotetramer and two H2A-H2B heterodimers. The octamer wraps approximately 147 bp of DNA. Acetylation is generally linked to gene activation. Can be acetylated to form H3K9ac, H3K14ac, H3K18ac and H3K23ac. H3K9ac could compete with H3K9me and prevent gene silencing. H3K9ac is restricted to euchromatin. In terms of processing, methylated to form mainly H3K4me, H3K9me, H3K18me, H3K23me, H3K27me and H3K36me. H3K4me1/2/3, H3K9me3, H3K27me3 and H3K36me1/2/3 are typical marks for euchromatin, whereas heterochromatic chromocenters are enriched in H3K9me1/2 and H3K27me1/2. H2BK143ub1 is probably prerequisite for H3K4me. Post-translationally, can be phosphorylated to form H3S10ph, H3T11ph and H3S28ph.

It is found in the nucleus. It localises to the chromosome. Functionally, core component of nucleosome. Nucleosomes wrap and compact DNA into chromatin, limiting DNA accessibility to the cellular machineries which require DNA as a template. Histones thereby play a central role in transcription regulation, DNA repair, DNA replication and chromosomal stability. DNA accessibility is regulated via a complex set of post-translational modifications of histones, also called histone code, and nucleosome remodeling. This chain is Histone H3, found in Griffithsia japonica (Red alga).